A 171-amino-acid polypeptide reads, in one-letter code: Crossover junction endodeoxyribonuclease RuvC (171 aa).

Active-site residues include aspartate 12, glutamate 72, and aspartate 144. Mg(2+) contacts are provided by aspartate 12, glutamate 72, and aspartate 144.

It belongs to the RuvC family. Homodimer which binds Holliday junction (HJ) DNA. The HJ becomes 2-fold symmetrical on binding to RuvC with unstacked arms; it has a different conformation from HJ DNA in complex with RuvA. In the full resolvosome a probable DNA-RuvA(4)-RuvB(12)-RuvC(2) complex forms which resolves the HJ. The cofactor is Mg(2+).

It is found in the cytoplasm. The enzyme catalyses Endonucleolytic cleavage at a junction such as a reciprocal single-stranded crossover between two homologous DNA duplexes (Holliday junction).. The RuvA-RuvB-RuvC complex processes Holliday junction (HJ) DNA during genetic recombination and DNA repair. Endonuclease that resolves HJ intermediates. Cleaves cruciform DNA by making single-stranded nicks across the HJ at symmetrical positions within the homologous arms, yielding a 5'-phosphate and a 3'-hydroxyl group; requires a central core of homology in the junction. The consensus cleavage sequence is 5'-(A/T)TT(C/G)-3'. Cleavage occurs on the 3'-side of the TT dinucleotide at the point of strand exchange. HJ branch migration catalyzed by RuvA-RuvB allows RuvC to scan DNA until it finds its consensus sequence, where it cleaves and resolves the cruciform DNA. The chain is Crossover junction endodeoxyribonuclease RuvC from Afipia carboxidovorans (strain ATCC 49405 / DSM 1227 / KCTC 32145 / OM5) (Oligotropha carboxidovorans).